Consider the following 1069-residue polypeptide: Thyrotropin-releasing hormone-degrading ectoenzyme (1069 aa).

A compositionally biased stretch (acidic residues) spans 1–11; that stretch reads MALDGELGEQE. The interval 1-46 is disordered; the sequence is MALDGELGEQEEEKKKKKKKKRKKKKEEEEEEEGAEKSSSPFAAAM. The Cytoplasmic segment spans residues 1-85; sequence MALDGELGEQ…ERHIAVHKRL (85 aa). The segment covering 15 to 25 has biased composition (basic residues); that stretch reads KKKKKKKRKKK. Residues 86 to 106 traverse the membrane as a helical; Signal-anchor for type II membrane protein segment; that stretch reads VLAFAVSLVALLAVTMLAVLL. The Extracellular segment spans residues 107–1069; that stretch reads SLRFDECGAS…FQWLGKALRH (963 aa). The tract at residues 117-179 is disordered; the sequence is ATPGADGGPS…PSEEEREPWE (63 aa). Residues 121–136 are compositionally biased toward gly residues; the sequence is ADGGPSGFPERGGNGS. Asn134, Asn205, Asn220, Asn267, and Asn383 each carry an N-linked (GlcNAc...) asparagine glycan. Position 449 to 453 (449 to 453) interacts with substrate; sequence AAMEN. His485 contributes to the Zn(2+) binding site. Residue Glu486 is the Proton acceptor of the active site. Positions 489 and 508 each coordinate Zn(2+). 7 N-linked (GlcNAc...) asparagine glycosylation sites follow: Asn650, Asn679, Asn694, Asn708, Asn729, Asn845, and Asn951.

This sequence belongs to the peptidase M1 family. In terms of assembly, homodimer; disulfide-linked. Requires Zn(2+) as cofactor. In terms of tissue distribution, predominantly expressed in brain.

It is found in the membrane. It carries out the reaction Release of the N-terminal pyroglutamyl group from pGlu-|-His-Xaa tripeptides and pGlu-|-His-Xaa-Gly tetrapeptides.. Specific inactivation of TRH after its release. The chain is Thyrotropin-releasing hormone-degrading ectoenzyme (TRHDE) from Homo sapiens (Human).